Reading from the N-terminus, the 485-residue chain is Argininosuccinate lyase (485 aa).

This sequence belongs to the lyase 1 family. Argininosuccinate lyase subfamily.

The protein resides in the cytoplasm. The catalysed reaction is 2-(N(omega)-L-arginino)succinate = fumarate + L-arginine. The protein operates within amino-acid biosynthesis; L-arginine biosynthesis; L-arginine from L-ornithine and carbamoyl phosphate: step 3/3. The sequence is that of Argininosuccinate lyase from Paracidovorax citrulli (strain AAC00-1) (Acidovorax citrulli).